The sequence spans 242 residues: 2-C-methyl-D-erythritol 4-phosphate cytidylyltransferase (242 aa).

Belongs to the IspD/TarI cytidylyltransferase family. IspD subfamily.

It catalyses the reaction 2-C-methyl-D-erythritol 4-phosphate + CTP + H(+) = 4-CDP-2-C-methyl-D-erythritol + diphosphate. The protein operates within isoprenoid biosynthesis; isopentenyl diphosphate biosynthesis via DXP pathway; isopentenyl diphosphate from 1-deoxy-D-xylulose 5-phosphate: step 2/6. Its function is as follows. Catalyzes the formation of 4-diphosphocytidyl-2-C-methyl-D-erythritol from CTP and 2-C-methyl-D-erythritol 4-phosphate (MEP). This is 2-C-methyl-D-erythritol 4-phosphate cytidylyltransferase from Shewanella loihica (strain ATCC BAA-1088 / PV-4).